The following is a 304-amino-acid chain: DCN1-like protein 3 (304 aa).

2 disordered regions span residues 1–86 (MGQC…AEES) and 284–304 (EGEGRGALSSGPEGLCPEEQT). Residue glycine 2 is the site of N-myristoyl glycine attachment. Positions 86-278 (SSLQRLEELF…LFDTFVEWEM (193 aa)) constitute a DCUN1 domain.

As to quaternary structure, part of a complex containing DCUN1D3, CUL3 and RBX1. Interacts (via the DCUN1 domain) with the unneddylated cullins: interacts with CUL1, CUL2, CUL3, CUL4A, CUL4B and CUL5; these interactions promote the cullin neddylation and the identity of the cullin dictates the affinity of the interaction. Interacts preferentially with CUL3; this interaction triggers the relocalization of CUL3 to the cell membrane where CUL3 is neddylated. Interacts (via DCUN1 domain) with RBX1. May also interact with regulators or subunits of cullin-RING ligases such as RNF7, ELOB and DDB1; these interactions are bridged by cullins. Interacts (via DCUN1 domain) with CAND1; this interaction is bridged by cullins and strongly inhibits cullin neddylation. These CAND-cullin-DCNL complexes can only be neddylated in the presence of a substrate adapter. Interacts (via DCUN1 domain) with the N-terminally acetylated form of UBE2M and UBE2F. In terms of tissue distribution, tends to be down-regulated in different type of cancers, including lung neuroendocrine carcinoma, thyroid Huerthle cell carcinoma and lung squamous cell carcinoma. Mostly expressed in testis and brain. Highly expressed in liver, bladder and renal normal tissue than their tumor tissue counterparts. Palmitoylation stabilizes DCUN1D3 at the cell membrane.

Its subcellular location is the cell membrane. It is found in the cytoplasm. The protein resides in the nucleus. The protein localises to the perinuclear region. In terms of biological role, contributes to the neddylation of all cullins by transferring NEDD8 from N-terminally acetylated NEDD8-conjugating E2s enzyme to different cullin C-terminal domain-RBX complexes and may play a role in the cell cycle progression by regulating the SCF ubiquitin E3 ligase complex, after UV damage. At the cell membrane, can promote and as well inhibit cullins neddylation. The polypeptide is DCN1-like protein 3 (Homo sapiens (Human)).